Consider the following 942-residue polypeptide: Diacylglycerol kinase theta (942 aa).

Positions 1 to 59 (MAAAAEPGARAWLGGGSPRPGSPACSPVLGSGGRARPGPGPGPGPERAGVRAPGPAAAP) are disordered. Phosphoserine occurs at positions 22 and 26. Over residues 45–59 (PERAGVRAPGPAAAP) the composition is skewed to low complexity. Phorbol-ester/DAG-type zinc fingers lie at residues 60-108 (GHSF…RIPC), 121-168 (AHCF…CSDC), and 183-234 (HHHW…APEC). A disordered region spans residues 269 to 295 (EPGEGGDGADGSAAVGPGRETQATPES). The Ras-associating domain occupies 395 to 494 (AQEVLKIYPG…TRFYVAESRD (100 aa)). Short sequence motifs (LXXLL motif) lie at residues 555–559 (LYMLL) and 574–578 (LPDLL). The DAGKc domain occupies 584 to 721 (PDSCPLLVFV…MDRWTILLDA (138 aa)). The segment at 908–942 (PKVHMLRKAKQKPRRAGTTRDARADAAPAPESDPR) is disordered. A compositionally biased stretch (basic residues) spans 911–924 (HMLRKAKQKPRRAG). Low complexity predominate over residues 932–942 (DAAPAPESDPR).

Belongs to the eukaryotic diacylglycerol kinase family. As to quaternary structure, interacts with RHOA (constitutively activated, GTP-bound); the interaction inhibits DGKQ. Interacts with PRKCE. Interacts with PRKCH. Interacts with PLCB1. Interacts with NR5A1; the interaction requires both LXXLL motifs in DGKQ and is required for full phosphatidic acid-mediated activation of NR5A1. Phosphorylated by PRKCE and PRKCH in vitro.

Its subcellular location is the cytoplasm. It localises to the cytosol. The protein localises to the cell membrane. It is found in the synapse. The protein resides in the cytoskeleton. Its subcellular location is the nucleus. It localises to the nucleus speckle. The protein localises to the nucleus matrix. The enzyme catalyses a 1,2-diacyl-sn-glycerol + ATP = a 1,2-diacyl-sn-glycero-3-phosphate + ADP + H(+). The catalysed reaction is a 1-O-alkyl-sn-glycerol + ATP = a 1-O-alkyl-sn-glycero-3-phosphate + ADP + H(+). It carries out the reaction 1-O-alkyl-2-acyl-sn-glycerol + ATP = 1-O-alkyl-2-acyl-sn-glycero-3-phosphate + ADP + H(+). It catalyses the reaction 1,2-di-(9Z-octadecenoyl)-sn-glycerol + ATP = 1,2-di-(9Z-octadecenoyl)-sn-glycero-3-phosphate + ADP + H(+). The enzyme catalyses 1-O-hexadecyl-sn-glycerol + ATP = 1-O-hexadecyl-sn-glycero-3-phosphate + ADP + H(+). The catalysed reaction is 1-O-hexadecyl-2-acetyl-sn-glycerol + ATP = 1-O-hexadecyl-2-acetyl-sn-glycero-3-phosphate + ADP + H(+). It carries out the reaction 1-octadecanoyl-2-(5Z,8Z,11Z,14Z-eicosatetraenoyl)-sn-glycerol + ATP = 1-octadecanoyl-2-(5Z,8Z,11Z,14Z-eicosatetraenoyl)-sn-glycero-3-phosphate + ADP + H(+). The protein operates within lipid metabolism; glycerolipid metabolism. With respect to regulation, activated by phosphatidylserine. Diacylglycerol kinase that converts diacylglycerol/DAG into phosphatidic acid/phosphatidate/PA and regulates the respective levels of these two bioactive lipids. Thereby, acts as a central switch between the signaling pathways activated by these second messengers with different cellular targets and opposite effects in numerous biological processes. Within the adrenocorticotropic hormone signaling pathway, produces phosphatidic acid which in turn activates NR5A1 and subsequent steroidogenic gene transcription. Also functions downstream of the nerve growth factor signaling pathway being specifically activated in the nucleus by the growth factor. Through its diacylglycerol activity also regulates synaptic vesicle endocytosis. This chain is Diacylglycerol kinase theta, found in Homo sapiens (Human).